The following is a 280-amino-acid chain: 4-diphosphocytidyl-2-C-methyl-D-erythritol kinase (280 aa).

Residue Lys9 is part of the active site. ATP is bound at residue 92–102; sequence PMGGGLGGGSS. Asp134 is a catalytic residue.

The protein belongs to the GHMP kinase family. IspE subfamily.

It catalyses the reaction 4-CDP-2-C-methyl-D-erythritol + ATP = 4-CDP-2-C-methyl-D-erythritol 2-phosphate + ADP + H(+). Its pathway is isoprenoid biosynthesis; isopentenyl diphosphate biosynthesis via DXP pathway; isopentenyl diphosphate from 1-deoxy-D-xylulose 5-phosphate: step 3/6. Catalyzes the phosphorylation of the position 2 hydroxy group of 4-diphosphocytidyl-2C-methyl-D-erythritol. The chain is 4-diphosphocytidyl-2-C-methyl-D-erythritol kinase from Nitrosococcus oceani (strain ATCC 19707 / BCRC 17464 / JCM 30415 / NCIMB 11848 / C-107).